Consider the following 429-residue polypeptide: Glutamate-1-semialdehyde 2,1-aminomutase 2 (429 aa).

N6-(pyridoxal phosphate)lysine is present on K268.

This sequence belongs to the class-III pyridoxal-phosphate-dependent aminotransferase family. HemL subfamily. In terms of assembly, homodimer. Pyridoxal 5'-phosphate serves as cofactor.

It is found in the cytoplasm. It carries out the reaction (S)-4-amino-5-oxopentanoate = 5-aminolevulinate. It functions in the pathway porphyrin-containing compound metabolism; protoporphyrin-IX biosynthesis; 5-aminolevulinate from L-glutamyl-tRNA(Glu): step 2/2. This is Glutamate-1-semialdehyde 2,1-aminomutase 2 from Geobacillus kaustophilus (strain HTA426).